Reading from the N-terminus, the 848-residue chain is ATP-dependent Clp protease ATP-binding subunit ClpC1 (848 aa).

One can recognise a Clp R domain in the interval 2 to 144; that stretch reads FERFTDRARR…RQQVIQLLSG (143 aa). Repeat regions lie at residues 5-70 and 80-144; these read FTDR…IGQG and FTPR…LLSG. In terms of domain architecture, UVR spans 425-460; it reads DEKIADARREKESAIDAQDFEKAAALRDKEKQLVAQ. ATP-binding positions include 553 to 560 and 617 to 626; these read GPSGVGKT and KPFSVVLFDE. A disordered region spans residues 811-848; the sequence is GQGEDAKFTFSGGPKRAETAEPDLAGAGAAGAPTAGTE. The span at 835–848 shows a compositional bias: low complexity; sequence AGAGAAGAPTAGTE.

This sequence belongs to the ClpA/ClpB family. ClpC subfamily.

Functionally, ATP-dependent specificity component of the Clp protease. It directs the protease to specific substrates. Can perform chaperone functions in the absence of ClpP. Degrades anti-sigma-E factor RseA in the presence of ClpP2. The chain is ATP-dependent Clp protease ATP-binding subunit ClpC1 (clpC1) from Mycolicibacterium smegmatis (strain ATCC 700084 / mc(2)155) (Mycobacterium smegmatis).